Reading from the N-terminus, the 211-residue chain is Large ribosomal subunit protein uL4 (211 aa).

Residues 52 to 79 (GRAEVHGSNSKPYSQKGTGRARRGDKKS) form a disordered region. A compositionally biased stretch (polar residues) spans 58-68 (GSNSKPYSQKG).

The protein belongs to the universal ribosomal protein uL4 family. In terms of assembly, part of the 50S ribosomal subunit.

Its function is as follows. One of the primary rRNA binding proteins, this protein initially binds near the 5'-end of the 23S rRNA. It is important during the early stages of 50S assembly. It makes multiple contacts with different domains of the 23S rRNA in the assembled 50S subunit and ribosome. Functionally, forms part of the polypeptide exit tunnel. The chain is Large ribosomal subunit protein uL4 from Treponema denticola (strain ATCC 35405 / DSM 14222 / CIP 103919 / JCM 8153 / KCTC 15104).